Consider the following 1852-residue polypeptide: Voltage-dependent L-type calcium channel subunit alpha-1S (1852 aa).

The interval methionine 1–isoleucine 23 is disordered. Residues methionine 1–lysine 51 lie on the Cytoplasmic side of the membrane. The stretch at asparagine 38–phenylalanine 337 is one I repeat. Residues proline 52–valine 70 traverse the membrane as a helical segment. Residues tyrosine 71–glycine 85 are Extracellular-facing. Asparagine 79 is a glycosylation site (N-linked (GlcNAc...) asparagine). Residues leucine 86–isoleucine 106 form a helical membrane-spanning segment. Residues alanine 107–aspartate 115 are Cytoplasmic-facing. A helical transmembrane segment spans residues alanine 116–threonine 136. At valine 137–aspartate 160 the chain is on the extracellular side. The helical transmembrane segment at valine 161 to valine 179 threads the bilayer. The Cytoplasmic segment spans residues proline 180–leucine 196. The chain crosses the membrane as a helical span at residues phenylalanine 197–phenylalanine 218. The Extracellular portion of the chain corresponds to lysine 219–glycine 279. 2 disulfide bridges follow: cysteine 226/cysteine 254 and cysteine 245/cysteine 261. Asparagine 257 is a glycosylation site (N-linked (GlcNAc...) asparagine). The segment at residues phenylalanine 280–valine 301 is an intramembrane region (pore-forming). The Selectivity filter of repeat I motif lies at serine 290–glycine 293. Glutamate 292 lines the Ca(2+) pocket. The Extracellular segment spans residues asparagine 302–tryptophan 309. A helical transmembrane segment spans residues proline 310–leucine 330. The Cytoplasmic portion of the chain corresponds to glycine 331–lysine 432. A binding to the beta subunit region spans residues glutamine 357–glutamate 374. 2 positions are modified to phosphoserine: serine 393 and serine 397. The II repeat unit spans residues asparagine 418 to leucine 664. The helical transmembrane segment at valine 433–serine 451 threads the bilayer. The Extracellular segment spans residues glutamate 452–histidine 462. Residues leucine 463–methionine 483 traverse the membrane as a helical segment. The Cytoplasmic portion of the chain corresponds to tyrosine 484–serine 494. The helical transmembrane segment at isoleucine 495–valine 514 threads the bilayer. Topologically, residues glutamate 515 to glycine 523 are extracellular. Residues isoleucine 524–tryptophan 542 traverse the membrane as a helical segment. The Cytoplasmic portion of the chain corresponds to threonine 543–serine 561. The chain crosses the membrane as a helical span at residues leucine 562 to phenylalanine 581. The Extracellular portion of the chain corresponds to glycine 582 to proline 601. Residues glutamine 602 to glycine 623 constitute an intramembrane region (pore-forming). The Selectivity filter of repeat II signature appears at threonine 612 to aspartate 615. Glutamate 614 provides a ligand contact to Ca(2+). At isoleucine 624–proline 633 the chain is on the extracellular side. Residues glycine 634–leucine 653 form a helical membrane-spanning segment. At asparagine 654–threonine 799 the chain is on the cytoplasmic side. Disordered stretches follow at residues lysine 675–glutamate 712 and glutamate 731–arginine 757. Serine 687 bears the Phosphoserine; by PKA mark. The segment covering leucine 690–glycine 711 has biased composition (basic and acidic residues). Over residues proline 742 to glutamate 751 the composition is skewed to acidic residues. Residues glutamate 768 to phenylalanine 1068 form an III repeat. A helical transmembrane segment spans residues tryptophan 800–alanine 818. Topologically, residues glutamate 819–glutamine 830 are extracellular. A helical transmembrane segment spans residues isoleucine 831 to lysine 850. The Cytoplasmic portion of the chain corresponds to methionine 851–asparagine 866. A helical transmembrane segment spans residues tyrosine 867–leucine 885. Topologically, residues glutamate 886–valine 892 are extracellular. A helical transmembrane segment spans residues valine 893–alanine 911. Topologically, residues lysine 912–asparagine 930 are cytoplasmic. A helical transmembrane segment spans residues isoleucine 931–phenylalanine 950. The Extracellular segment spans residues lysine 951 to valine 1000. Cysteine 957 and cysteine 968 are disulfide-bonded. Residues arginine 988–lysine 1077 are dihydropyridine binding. The segment at residues leucine 1001–tyrosine 1021 is an intramembrane region (pore-forming). The Selectivity filter of repeat III motif lies at threonine 1012 to glycine 1015. Glutamate 1014 lines the Ca(2+) pocket. The Extracellular segment spans residues lysine 1022–arginine 1038. The helical transmembrane segment at valine 1039–phenylalanine 1060 threads the bilayer. Over valine 1061 to serine 1118 the chain is Cytoplasmic. An IV repeat occupies asparagine 1105–phenylalanine 1384. A helical transmembrane segment spans residues tyrosine 1119–tyrosine 1140. The N-linked (GlcNAc...) asparagine glycan is linked to asparagine 1141. Over asparagine 1141–histidine 1148 the chain is Extracellular. A helical membrane pass occupies residues isoleucine 1149–isoleucine 1170. Over alanine 1171–aspartate 1180 the chain is Cytoplasmic. A helical transmembrane segment spans residues proline 1181–serine 1200. Residues glutamate 1201–serine 1231 lie on the Extracellular side of the membrane. Residues serine 1232–alanine 1250 traverse the membrane as a helical segment. At glutamate 1251–proline 1268 the chain is on the cytoplasmic side. Residues tyrosine 1269–phenylalanine 1289 form a helical membrane-spanning segment. At glycine 1290 to glutamine 1311 the chain is on the extracellular side. Residues alanine 1312–leucine 1330 constitute an intramembrane region (pore-forming). The short motif at threonine 1321–alanine 1324 is the Selectivity filter of repeat IV element. Residues alanine 1331–phenylalanine 1356 are Extracellular-facing. Residues leucine 1337 to lysine 1403 are dihydropyridine binding. Cysteine 1338 and cysteine 1352 are joined by a disulfide. Phenylalkylamine binding regions lie at residues glutamate 1349–tryptophan 1391 and glutamate 1349–serine 1392. A helical membrane pass occupies residues alanine 1357–methionine 1381. Topologically, residues aspartate 1382–proline 1852 are cytoplasmic. The tract at residues lysine 1522 to glutamate 1542 is interaction with calmodulin. Serine 1575 carries the phosphoserine; by PKA and CAMK2 modification. At threonine 1579 the chain carries Phosphothreonine. Position 1617 is a phosphoserine; by PKA (serine 1617). Disordered regions lie at residues glycine 1702–lysine 1721 and threonine 1727–arginine 1762. Basic and acidic residues predominate over residues lysine 1747–lysine 1757.

It belongs to the calcium channel alpha-1 subunit (TC 1.A.1.11) family. CACNA1S subfamily. As to quaternary structure, component of a calcium channel complex consisting of a pore-forming alpha subunit (CACNA1S) and the ancillary subunits CACNB1 or CACNB2, CACNG1 and CACNA2D1. The channel complex contains alpha, beta, gamma and delta subunits in a 1:1:1:1 ratio, i.e. it contains either CACNB1 or CACNB2. CACNA1S channel activity is modulated by the auxiliary subunits (CACNB1 or CACNB2, CACNG1 and CACNA2D1). Interacts with DYSF and JSRP1. Interacts with RYR1. Interacts with STAC, STAC2 and STAC3 (via their SH3 domains). Interacts with CALM. Post-translationally, the alpha-1S subunit is found in two isoforms in the skeletal muscle: a minor form of 212 kDa containing the complete amino acid sequence, and a major form of 190 kDa derived from the full-length form by post-translational proteolysis close to Phe-1690. In terms of processing, phosphorylated. Phosphorylation by PKA activates the calcium channel. Both the minor and major forms are phosphorylated in vitro by PKA. Phosphorylation at Ser-1575 is involved in beta-adrenergic-mediated regulation of the channel.

The protein localises to the cell membrane. It localises to the sarcolemma. Its subcellular location is the T-tubule. It carries out the reaction Ca(2+)(in) = Ca(2+)(out). Its activity is regulated as follows. Channel activity is blocked by dihydropyridines (DHP), phenylalkylamines, and by benzothiazepines. Its function is as follows. Pore-forming, alpha-1S subunit of the voltage-gated calcium channel that gives rise to L-type calcium currents in skeletal muscle. Calcium channels containing the alpha-1S subunit play an important role in excitation-contraction coupling in skeletal muscle via their interaction with RYR1, which triggers Ca(2+) release from the sarcplasmic reticulum and ultimately results in muscle contraction. Long-lasting (L-type) calcium channels belong to the 'high-voltage activated' (HVA) group. This Mus musculus (Mouse) protein is Voltage-dependent L-type calcium channel subunit alpha-1S (Cacna1s).